The sequence spans 347 residues: NADH-ubiquinone oxidoreductase chain 2 (347 aa).

11 consecutive transmembrane segments (helical) span residues 3 to 23 (PPILIIIMSTVMSGTMIVLTS), 25 to 45 (HWLLTWIGFEMNMLAIIPILM), 60 to 80 (FLTQATASMLLMMGIIINLMF), 96 to 116 (GLVTIALTMKLGMAPFHFWVP), 122 to 142 (ISLSSGMILLTWQKIAPLSVL), 153 to 173 (LLITMAIASVLIGGWGGLNQT), 178 to 198 (ILAYSSIAHMGWMTVILTYNP), 200 to 220 (LMVLNLTIYITMTLSTFMLFM), 237 to 257 (LPLMTSLILMLMMSLGGLPPL), 274 to 294 (DMIILPTFMAITALLNLYFYM), and 323 to 343 (IILLPPLIIISTMLLPMTPMM).

The protein belongs to the complex I subunit 2 family. In terms of assembly, core subunit of respiratory chain NADH dehydrogenase (Complex I) which is composed of 45 different subunits. Interacts with TMEM242.

It is found in the mitochondrion inner membrane. It carries out the reaction a ubiquinone + NADH + 5 H(+)(in) = a ubiquinol + NAD(+) + 4 H(+)(out). Core subunit of the mitochondrial membrane respiratory chain NADH dehydrogenase (Complex I) which catalyzes electron transfer from NADH through the respiratory chain, using ubiquinone as an electron acceptor. Essential for the catalytic activity and assembly of complex I. This Phoca vitulina (Harbor seal) protein is NADH-ubiquinone oxidoreductase chain 2.